A 151-amino-acid chain; its full sequence is Deoxyuridine 5'-triphosphate nucleotidohydrolase (151 aa).

Residues 70–72 (RSG), Asn-83, 87–89 (LID), and Met-97 contribute to the substrate site.

This sequence belongs to the dUTPase family. Mg(2+) serves as cofactor.

It carries out the reaction dUTP + H2O = dUMP + diphosphate + H(+). It participates in pyrimidine metabolism; dUMP biosynthesis; dUMP from dCTP (dUTP route): step 2/2. Its function is as follows. This enzyme is involved in nucleotide metabolism: it produces dUMP, the immediate precursor of thymidine nucleotides and it decreases the intracellular concentration of dUTP so that uracil cannot be incorporated into DNA. This Stutzerimonas stutzeri (strain A1501) (Pseudomonas stutzeri) protein is Deoxyuridine 5'-triphosphate nucleotidohydrolase.